Reading from the N-terminus, the 269-residue chain is Octanoyltransferase LipM (269 aa).

The 209-residue stretch at 31 to 239 (NHGAPVLRFY…GFSEGFEVNF (209 aa)) folds into the BPL/LPL catalytic domain. Cys-141 (acyl-thioester intermediate) is an active-site residue.

This sequence belongs to the octanoyltransferase LipM family. As to quaternary structure, monomer.

The enzyme catalyses octanoyl-[ACP] + L-lysyl-[protein] = N(6)-octanoyl-L-lysyl-[protein] + holo-[ACP] + H(+). Its pathway is protein modification; protein lipoylation via endogenous pathway; protein N(6)-(lipoyl)lysine from octanoyl-[acyl-carrier-protein]. Its function is as follows. Catalyzes the transfer of endogenously produced octanoic acid from octanoyl-acyl-carrier-protein onto the lipoyl domain of GcvH, an intermediate carrier during protein lipoylation. The protein is Octanoyltransferase LipM of Carboxydothermus hydrogenoformans (strain ATCC BAA-161 / DSM 6008 / Z-2901).